The chain runs to 550 residues: Hydroxylamine reductase (550 aa).

4 residues coordinate [2Fe-2S] cluster: Cys-3, Cys-6, Cys-18, and Cys-25. Positions 249, 273, 317, 405, 433, 458, 492, and 494 each coordinate hybrid [4Fe-2O-2S] cluster. The residue at position 405 (Cys-405) is a Cysteine persulfide.

The protein belongs to the HCP family. Requires [2Fe-2S] cluster as cofactor. Hybrid [4Fe-2O-2S] cluster serves as cofactor.

The protein localises to the cytoplasm. It catalyses the reaction A + NH4(+) + H2O = hydroxylamine + AH2 + H(+). Catalyzes the reduction of hydroxylamine to form NH(3) and H(2)O. The sequence is that of Hydroxylamine reductase from Escherichia coli (strain SMS-3-5 / SECEC).